An 83-amino-acid chain; its full sequence is Cytochrome c5 (83 aa).

Residues Cys-15, Cys-18, His-19, and Met-59 each coordinate heme c. Cysteines 65 and 68 form a disulfide.

The protein belongs to the cytochrome c family. Homodimer. In terms of processing, binds 1 heme c group covalently per subunit.

In terms of biological role, it is unreactive with cytochrome c reductase or oxidase. In Azotobacter vinelandii, this protein is Cytochrome c5.